The primary structure comprises 484 residues: Calcium-dependent protein kinase 31 (484 aa).

A lipid anchor (N-myristoyl glycine) is attached at glycine 2. The Protein kinase domain occupies 28–290; the sequence is YILGDELGQG…AAEVLGHPWM (263 aa). Residues 34-42 and lysine 57 each bind ATP; that span reads LGQGQFGIT. Catalysis depends on aspartate 156, which acts as the Proton acceptor. Serine 196 carries the post-translational modification Phosphoserine. Residues 295 to 325 form an autoinhibitory domain region; that stretch reads ASDKPIDGVVLSRLKQFRDMNKLKKVALKVI. 4 EF-hand domains span residues 332 to 367, 368 to 403, 404 to 439, and 444 to 474; these read EEIKGLKTLFTNIDTDKSGTITLEELKTGLTRLGSN, LSKTEVEQLMEAADVDGNGTIDIDEFISATMHRYRL, DRDDHVYQAFQHFDKDNDGHITKEELEMAMKEHGVG, and IKQIITEVDTDNDGKINFEEFRTMMRSGSSL. Aspartate 345, aspartate 347, serine 349, threonine 351, glutamate 356, aspartate 381, aspartate 383, asparagine 385, threonine 387, glutamate 392, aspartate 417, aspartate 419, aspartate 421, histidine 423, glutamate 428, aspartate 452, aspartate 454, aspartate 456, lysine 458, and glutamate 463 together coordinate Ca(2+).

This sequence belongs to the protein kinase superfamily. Ser/Thr protein kinase family. CDPK subfamily.

The protein localises to the membrane. It carries out the reaction L-seryl-[protein] + ATP = O-phospho-L-seryl-[protein] + ADP + H(+). The catalysed reaction is L-threonyl-[protein] + ATP = O-phospho-L-threonyl-[protein] + ADP + H(+). Its activity is regulated as follows. Activated by calcium. Autophosphorylation may play an important role in the regulation of the kinase activity. Its function is as follows. May play a role in signal transduction pathways that involve calcium as a second messenger. This chain is Calcium-dependent protein kinase 31 (CPK31), found in Arabidopsis thaliana (Mouse-ear cress).